The primary structure comprises 150 residues: uncharacterized protein (150 aa).

Residues 1-39 form the signal peptide; that stretch reads MKQRFSQVATVIFFVMSIRSPRNLGFFFTLALFVVLVCS.

This is an uncharacterized protein from Saccharomyces cerevisiae (strain ATCC 204508 / S288c) (Baker's yeast).